The sequence spans 138 residues: NADH dehydrogenase [ubiquinone] 1 alpha subcomplex subunit N7BM (138 aa).

Belongs to the complex I NDUFA12 subunit family. Complex I is composed of 42 different subunits.

The protein resides in the mitochondrion inner membrane. Its function is as follows. Accessory subunit of the mitochondrial membrane respiratory chain NADH dehydrogenase (Complex I), that is believed not to be involved in catalysis. Complex I functions in the transfer of electrons from NADH to the respiratory chain. The immediate electron acceptor for the enzyme is believed to be ubiquinone. This is NADH dehydrogenase [ubiquinone] 1 alpha subcomplex subunit N7BM from Yarrowia lipolytica (strain CLIB 122 / E 150) (Yeast).